Here is a 93-residue protein sequence, read N- to C-terminus: Large ribosomal subunit protein uL23cz/uL23cy (93 aa).

The protein belongs to the universal ribosomal protein uL23 family. As to quaternary structure, part of the 50S ribosomal subunit.

The protein resides in the plastid. Its subcellular location is the chloroplast. Functionally, binds to 23S rRNA. In Platanus occidentalis (Sycamore), this protein is Large ribosomal subunit protein uL23cz/uL23cy (rpl23-A).